The chain runs to 191 residues: Molybdenum cofactor guanylyltransferase (191 aa).

GTP contacts are provided by residues 13–15 (LAG), Lys26, Asp72, and Asp102. Residue Asp102 coordinates Mg(2+).

It belongs to the MobA family. As to quaternary structure, monomer. It depends on Mg(2+) as a cofactor.

It localises to the cytoplasm. It catalyses the reaction Mo-molybdopterin + GTP + H(+) = Mo-molybdopterin guanine dinucleotide + diphosphate. Functionally, transfers a GMP moiety from GTP to Mo-molybdopterin (Mo-MPT) cofactor (Moco or molybdenum cofactor) to form Mo-molybdopterin guanine dinucleotide (Mo-MGD) cofactor. This is Molybdenum cofactor guanylyltransferase from Pseudomonas putida (strain ATCC 700007 / DSM 6899 / JCM 31910 / BCRC 17059 / LMG 24140 / F1).